We begin with the raw amino-acid sequence, 470 residues long: Neuronal acetylcholine receptor subunit beta-4 (470 aa).

An N-terminal signal peptide occupies residues 1 to 3 (STA). The Extracellular portion of the chain corresponds to 4–216 (ADAEEKLMNH…IIKRKPLFYT (213 aa)). N-linked (GlcNAc...) asparagine glycans are attached at residues Asn-29, Asn-118, and Asn-146. A disulfide bridge links Cys-133 with Cys-147. Residues 217–237 (INLIIPCVLITSLAILVFYLP) traverse the membrane as a helical segment. The Cytoplasmic segment spans residues 238 to 245 (SDCGEKMT). Glu-242 is a binding site for Na(+). Residues 246–266 (LCISVLLALTVFLLLISKIVP) traverse the membrane as a helical segment. The Extracellular portion of the chain corresponds to 267–278 (PTSLDVPLIGKY). Residues 279–299 (LMFTMVLVTFSIVTSVCVLNV) traverse the membrane as a helical segment. At 300 to 438 (HHRSPSTHTM…WKYVAMVVDR (139 aa)) the chain is on the cytoplasmic side. Residues 439-459 (LFLWIFVLVCVLGTVGLFLQP) traverse the membrane as a helical segment. Over 460-470 (LFQNHIAATNP) the chain is Extracellular.

This sequence belongs to the ligand-gated ion channel (TC 1.A.9) family. Acetylcholine receptor (TC 1.A.9.1) subfamily. Beta-4/CHRNB4 sub-subfamily. Neuronal AChR is composed of two different types of subunits: alpha and beta. CHRNB4/Beta-4 subunit can be combined to CHRNA2/alpha-2, CHRNA3/alpha-3 or CHRNA4/alpha-4, CHRNA5/alpha-5 and CHRNB3/beta-3 to give rise to functional receptors.

It localises to the synaptic cell membrane. The protein localises to the cell membrane. It carries out the reaction Ca(2+)(in) = Ca(2+)(out). It catalyses the reaction K(+)(in) = K(+)(out). The enzyme catalyses Na(+)(in) = Na(+)(out). Activated by a myriad of ligands such as acetylcholine, cytisine, nicotine, choline and epibatidine. The heteropentamer CHRNA3:CHRNB4 activity is blocked by the alpha-conotoxin ImI and AuIB. Component of neuronal acetylcholine receptors (nAChRs) that function as pentameric, ligand-gated cation channels with high calcium permeability among other activities. nAChRs are excitatory neurotrasnmitter receptors formed by a collection of nAChR subunits known to mediate synaptic transmission in the nervous system and the neuromuscular junction. Each nAchR subunit confers differential attributes to channel properties, including activation, deactivation and desensitization kinetics, pH sensitivity, cation permeability, and binding to allosteric modulators. CHRNB4 forms heteropentameric neuronal acetylcholine receptors with CHRNA2, CHRNA3 and CHRNA4, as well as CHRNA5 and CHRNB3 as accesory subunits. CHRNA3:CHRNB4 being predominant in neurons of the autonomic ganglia, it is known as ganglionic nicotinic receptor. CHRNA3:CHRNB4 or CHRNA3:CHRNA5:CHRNB4 play also an important role in the habenulo-interpeduncular tract, modulating the mesolimbic dopamine system and affecting reward circuits and addiction. Hypothalamic CHRNA3:CHRNB4 nAChR activation by nicotine leads to activation of POMC neurons and a decrease in food intake. The protein is Neuronal acetylcholine receptor subunit beta-4 (CHRNB4) of Gallus gallus (Chicken).